The sequence spans 284 residues: Avenin-like b4 (284 aa).

A signal peptide spans 1 to 18 (MKVFILALLALTATTAIA).

Belongs to the prolamin family. Post-translationally, contains disulfide bonds.

Seed storage protein. Might be integrated via inter-chain disulfide bonds within the glutenin polymer. In Triticum aestivum (Wheat), this protein is Avenin-like b4.